Here is a 153-residue protein sequence, read N- to C-terminus: Ribosome maturation factor RimP (153 aa).

This sequence belongs to the RimP family.

The protein resides in the cytoplasm. Functionally, required for maturation of 30S ribosomal subunits. In Solibacter usitatus (strain Ellin6076), this protein is Ribosome maturation factor RimP.